A 204-amino-acid polypeptide reads, in one-letter code: Small ribosomal subunit protein uS7 (204 aa).

This sequence belongs to the universal ribosomal protein uS7 family. Part of the 30S ribosomal subunit.

One of the primary rRNA binding proteins, it binds directly to 16S rRNA where it nucleates assembly of the head domain of the 30S subunit. Is located at the subunit interface close to the decoding center. The sequence is that of Small ribosomal subunit protein uS7 from Methanoregula boonei (strain DSM 21154 / JCM 14090 / 6A8).